Reading from the N-terminus, the 53-residue chain is Rubredoxin 3 (53 aa).

A Rubredoxin-like domain is found at 1–53 (MQKWVCVPCGYEYDPADGDPENGIEPGTAFEDLPEDWVCPVCGVDKSFFEPVS). Cysteine 6, cysteine 9, cysteine 39, and cysteine 42 together coordinate Fe cation.

The protein belongs to the rubredoxin family. In terms of assembly, monomer. The cofactor is Fe(3+).

Functions as an electron acceptor for pyruvate ferredoxin oxidoreductase (PFOR). This Chlorobaculum tepidum (strain ATCC 49652 / DSM 12025 / NBRC 103806 / TLS) (Chlorobium tepidum) protein is Rubredoxin 3 (rub3).